Consider the following 302-residue polypeptide: Zinc transporter ZIP1 (302 aa).

The Extracellular segment spans residues 1-6 (MDYLLQ). Residues 7–27 (VKVGALVGLLLLTLFFGFIPA) form a helical membrane-spanning segment. The Cytoplasmic segment spans residues 28 to 44 (RMKWFHVTGGTELHKAV). A helical transmembrane segment spans residues 45–65 (LSFVSCFAGGVFLSACLLDII). Over 66–86 (PDYLSDIHGELQKRDLDDGFP) the chain is Extracellular. A helical transmembrane segment spans residues 87 to 107 (LPEFIMACGFFTVLILEKMVL). The Cytoplasmic segment spans residues 108–158 (SCTEGHRNEETAPLLAPAAPNGHAHGHPSVNDLEGSGHHVHVDFHAHSSFR). Residues 159 to 179 (SFMLFLSLSLHSVFEGLAIGL) form a helical membrane-spanning segment. Residues 180–185 (QTTNAK) lie on the Extracellular side of the membrane. Residues 186-206 (VLEICIAILVHKSIIVFSLSV) traverse the membrane as a helical segment. At 207 to 219 (KLVQSAVKPLWVV) the chain is on the cytoplasmic side. Residues 220 to 240 (LYVTVFAIMSPLGIGIGIVVI) form a helical membrane-spanning segment. Residues 241 to 247 (ETERQAG) are Extracellular-facing. A helical transmembrane segment spans residues 248–268 (GLIQAVLEGLAAGTFIYITFL). Over 269–281 (EILPHELNSSERP) the chain is Cytoplasmic. A helical transmembrane segment spans residues 282-302 (LLKVLFLLCGFSIMAALCFLG).

The protein belongs to the ZIP transporter (TC 2.A.5) family. As to expression, ubiquitous. Highest levels in ovary, high levels in heart, eye, kidney and brain, moderate levels in intestine and low levels in gill and skin.

The protein localises to the cell membrane. It localises to the endoplasmic reticulum membrane. The enzyme catalyses Zn(2+)(in) = Zn(2+)(out). Its function is as follows. Transporter for the divalent cation Zn(2+). Mediates the influx of Zn(2+) into cells from extracellular space. The chain is Zinc transporter ZIP1 (slc39a1) from Danio rerio (Zebrafish).